The chain runs to 1378 residues: S-cell enriched with leucine-rich repeat-containing protein slrA (1378 aa).

Residues 17-37 form a helical membrane-spanning segment; the sequence is IFKILYCYLFTSLLLILSTWV. N59, N112, N143, N172, and N201 each carry an N-linked (GlcNAc...) asparagine glycan. LRR repeat units follow at residues 143–165, 167–188, 191–212, 213–235, 236–257, 260–281, 282–304, 307–329, and 331–353; these read NLTG…LPYL, HLRN…GLLK, SLVA…ADSK, AISY…WKTP, NLLF…EFFR, SLDY…LSKS, RISY…TCWK, SLRI…IFDH, and PLQY…LDCA. N-linked (GlcNAc...) asparagine glycans are attached at residues N265, N287, and N296. N416, N436, N451, N491, N513, N596, N605, N634, N704, N710, N740, N741, N771, N788, N801, N826, N843, N861, N875, and N907 each carry an N-linked (GlcNAc...) asparagine glycan. A coiled-coil region spans residues 886–946; that stretch reads SLNNNNNNNN…NNNENNNENK (61 aa). Over residues 891–909 the composition is skewed to low complexity; the sequence is NNNNNNNNNKNNNNNNNDS. The disordered stretch occupies residues 891–945; sequence NNNNNNNNNKNNNNNNNDSNNEKEVVEDEEEDLDYSSQNDNNNINNNNNENNNEN. The span at 915 to 924 shows a compositional bias: acidic residues; that stretch reads VVEDEEEDLD. Residues 929–945 show a composition bias toward low complexity; it reads NDNNNINNNNNENNNEN. N-linked (GlcNAc...) asparagine glycosylation is found at N953, N970, N1090, and N1100. Residues 1160–1180 form a helical membrane-spanning segment; that stretch reads YYIVFFGCASGLILVLVICIV. Residues 1227 to 1276 show a composition bias toward low complexity; it reads DLNNNNNNNNNNNNNNNNNNNNNNNNNNNNNNNNNFNDGSDTFNNNNKKN. Residues 1227–1378 form a disordered region; that stretch reads DLNNNNNNNN…KKHLTIINKK (152 aa). A compositionally biased stretch (basic and acidic residues) spans 1289-1304; it reads DGKENDIKNINNKKDE. Residues 1305–1324 show a composition bias toward acidic residues; it reads KEDDGDDDDDEDDDEYEDDT. A compositionally biased stretch (low complexity) spans 1328–1353; sequence SSGNSSRSKGSDGGSSSNSLSSDKQS. N-linked (GlcNAc...) asparagine glycans are attached at residues N1331 and N1360. Residues 1354–1364 are compositionally biased toward polar residues; that stretch reads FNNGNENNSII. The span at 1368-1378 shows a compositional bias: basic residues; that stretch reads KKKHLTIINKK.

The protein resides in the membrane. The polypeptide is S-cell enriched with leucine-rich repeat-containing protein slrA (slrA) (Dictyostelium discoideum (Social amoeba)).